Reading from the N-terminus, the 422-residue chain is Metallocarboxypeptidase A (422 aa).

The first 17 residues, 1–17 (MRSVLSLALLAANVVTA), serve as a signal peptide directing secretion. A propeptide spans 18–112 (AVVSPFDYSG…FEAYSAGYAP (95 aa)) (activation peptide). Residues 119 to 419 (SYHSYQDHLS…AGTVAMLKAV (301 aa)) enclose the Peptidase M14 domain. Zn(2+) is bound by residues His-179 and Glu-182. Substrate-binding positions include 179-182 (HARE), Arg-237, and 254-255 (NR). A disulfide bridge links Cys-248 with Cys-271. Residue His-309 participates in Zn(2+) binding. 310–311 (SY) is a binding site for substrate. Residue Glu-385 is the Proton donor/acceptor of the active site.

The protein belongs to the peptidase M14 family. It depends on Zn(2+) as a cofactor.

It is found in the secreted. In terms of biological role, extracellular metalloprotease that contributes to pathogenicity. This Trichophyton rubrum (Athlete's foot fungus) protein is Metallocarboxypeptidase A (MCPA).